We begin with the raw amino-acid sequence, 845 residues long: ABC transporter A family member 9 (845 aa).

The next 7 membrane-spanning stretches (helical) occupy residues 33-53 (CVQISIPLILVIILVIVNFWV), 192-212 (AFVAFSMNTMTTTILNYFLGG), 235-255 (IASLLGGSFYPFALSFIMPLF), 292-312 (IYFIIIVFVVGVSSIFGFAVF), 318-338 (FAMFLFLFAWGNSMITFSFFL), 347-367 (AASIFGYFLVIIAVNLNSILS), and 417-437 (SKIIFWLYIDAIVYLLIALYL). The ABC transporter domain occupies 531 to 762 (VIIEGLTKHY…FGDGYSVRIN (232 aa)). Residue 565 to 572 (GANGAGKT) participates in ATP binding.

The protein belongs to the ABC transporter superfamily. ABCA family.

It is found in the membrane. The chain is ABC transporter A family member 9 (abcA9) from Dictyostelium discoideum (Social amoeba).